We begin with the raw amino-acid sequence, 385 residues long: Meiosis-specific protein MEI4 (385 aa).

Residues 1–126 (MDVQKWYLRT…LSQHFVESCT (126 aa)) form an interaction with REC114 region. The interval 86–110 (AQEPKSSESTLTSMEDSGCDLSNEQ) is disordered. The span at 92 to 107 (SESTLTSMEDSGCDLS) shows a compositional bias: polar residues.

This sequence belongs to the MEI4L family. Part of the MCD recombinosome complex, at least composed of IHO1, REC114 and MEI4. Forms a complex with REC114; the interaction is required for MEI4 stability. Interacts (via N-terminal domain) with REC114 (via C-terminal domain). Interacts with IHO1.

Its subcellular location is the chromosome. Its function is as follows. Required for DNA double-strand breaks (DSBs) formation in unsynapsed regions during meiotic recombination. Probably acts by forming a complex with IHO1 and REC114, which activates DSBs formation in unsynapsed regions, an essential step to ensure completion of synapsis. The sequence is that of Meiosis-specific protein MEI4 from Homo sapiens (Human).